Consider the following 215-residue polypeptide: Translation initiation factor 6 (215 aa).

Belongs to the eIF-6 family.

Functionally, binds to the 50S ribosomal subunit and prevents its association with the 30S ribosomal subunit to form the 70S initiation complex. The polypeptide is Translation initiation factor 6 (Archaeoglobus fulgidus (strain ATCC 49558 / DSM 4304 / JCM 9628 / NBRC 100126 / VC-16)).